Here is a 183-residue protein sequence, read N- to C-terminus: Segregation and condensation protein B (183 aa).

Belongs to the ScpB family. In terms of assembly, homodimer. Homodimerization may be required to stabilize the binding of ScpA to the Smc head domains. Component of a cohesin-like complex composed of ScpA, ScpB and the Smc homodimer, in which ScpA and ScpB bind to the head domain of Smc. The presence of the three proteins is required for the association of the complex with DNA.

Its subcellular location is the cytoplasm. Its function is as follows. Participates in chromosomal partition during cell division. May act via the formation of a condensin-like complex containing Smc and ScpA that pull DNA away from mid-cell into both cell halves. This Streptococcus pyogenes serotype M1 protein is Segregation and condensation protein B.